The following is a 115-amino-acid chain: Promotilin (115 aa).

A signal peptide spans 1-25; it reads MLSRKATAILLVVHAAAMLASQTEG. The segment at 43–73 is disordered; the sequence is RYKGQKKSLSVQQRSEEVGPVDPAEPREEKQ.

Belongs to the motilin family.

It is found in the secreted. Plays an important role in the regulation of interdigestive gastrointestinal motility and indirectly causes rhythmic contraction of duodenal and colonic smooth muscle. The polypeptide is Promotilin (MLN) (Ovis aries (Sheep)).